Here is a 101-residue protein sequence, read N- to C-terminus: Ubiquitin-like protein SMT3 (101 aa).

The residue at position 2 (S2) is an N-acetylserine. 2 positions are modified to phosphoserine: S2 and S4. The Ubiquitin-like domain occupies 22-98 (THINLKVSDG…IEAHREQIGG (77 aa)). Residue G98 forms a Glycyl lysine isopeptide (Gly-Lys) (interchain with K-? in acceptor proteins) linkage. A propeptide spanning residues 99 to 101 (ATY) is cleaved from the precursor.

Belongs to the ubiquitin family. SUMO subfamily. Activated by a E1 ligase composed of AOS1 and UBA2.

Its function is as follows. Not known; suppressor of MIF2 mutations. This is Ubiquitin-like protein SMT3 (SMT3) from Saccharomyces cerevisiae (strain ATCC 204508 / S288c) (Baker's yeast).